The following is a 988-amino-acid chain: Mediator of RNA polymerase II transcription subunit 24 (988 aa).

6 consecutive short sequence motifs (LXXLL motif) follow at residues 128 to 132, 341 to 345, 445 to 449, 555 to 559, 786 to 790, and 856 to 860; these read LNWLL, LTPLL, LDLLL, LVALL, LPSLL, and LMRLL.

This sequence belongs to the Mediator complex subunit 24 family. As to quaternary structure, component of the Mediator complex.

The protein localises to the nucleus. Functionally, component of the Mediator complex, a coactivator involved in the regulated transcription of nearly all RNA polymerase II-dependent genes. Mediator functions as a bridge to convey information from gene-specific regulatory proteins to the basal RNA polymerase II transcription machinery. Mediator is recruited to promoters by direct interactions with regulatory proteins and serves as a scaffold for the assembly of a functional preinitiation complex with RNA polymerase II and the general transcription factors. The chain is Mediator of RNA polymerase II transcription subunit 24 (med24) from Xenopus laevis (African clawed frog).